The following is a 394-amino-acid chain: Cobalt-precorrin-5B C(1)-methyltransferase (394 aa).

It belongs to the CbiD family.

The catalysed reaction is Co-precorrin-5B + S-adenosyl-L-methionine = Co-precorrin-6A + S-adenosyl-L-homocysteine. Its pathway is cofactor biosynthesis; adenosylcobalamin biosynthesis; cob(II)yrinate a,c-diamide from sirohydrochlorin (anaerobic route): step 6/10. Catalyzes the methylation of C-1 in cobalt-precorrin-5B to form cobalt-precorrin-6A. The sequence is that of Cobalt-precorrin-5B C(1)-methyltransferase from Clostridium beijerinckii (strain ATCC 51743 / NCIMB 8052) (Clostridium acetobutylicum).